The sequence spans 1320 residues: Bifunctional protein PutA (1320 aa).

The proline dehydrogenase stretch occupies residues 228-574 (LSRSLNRIIG…SFVNRIADAT (347 aa)). Residues 653-1119 (QPVADGEMTP…LAHRPPNALN (467 aa)) form an aldehyde dehydrogenase region. Residues Glu883 and Cys917 contribute to the active site.

In the N-terminal section; belongs to the proline dehydrogenase family. It in the C-terminal section; belongs to the aldehyde dehydrogenase family. It depends on FAD as a cofactor.

The enzyme catalyses L-proline + a quinone = (S)-1-pyrroline-5-carboxylate + a quinol + H(+). The catalysed reaction is L-glutamate 5-semialdehyde + NAD(+) + H2O = L-glutamate + NADH + 2 H(+). It functions in the pathway amino-acid degradation; L-proline degradation into L-glutamate; L-glutamate from L-proline: step 1/2. It participates in amino-acid degradation; L-proline degradation into L-glutamate; L-glutamate from L-proline: step 2/2. In terms of biological role, oxidizes proline to glutamate for use as a carbon and nitrogen source and also function as a transcriptional repressor of the put operon. The protein is Bifunctional protein PutA (putA) of Salmonella typhimurium (strain LT2 / SGSC1412 / ATCC 700720).